Reading from the N-terminus, the 640-residue chain is Arogenate dehydrogenase 1, chloroplastic (640 aa).

The N-terminal 18 residues, 1–18, are a transit peptide targeting the chloroplast; that stretch reads MAETLITKPPLSLSFTSL. 2 consecutive Prephenate/arogenate dehydrogenase domains span residues 53-334 and 365-640; these read LRIA…GEND and LKIG…LLTS.

Belongs to the prephenate/arogenate dehydrogenase family. As to expression, expressed in roots, stems, leaves, flowers, siliques and seeds. More abundant in seeds.

Its subcellular location is the plastid. It is found in the chloroplast. The catalysed reaction is L-arogenate + NADP(+) = L-tyrosine + CO2 + NADPH. Its pathway is amino-acid biosynthesis; L-tyrosine biosynthesis; L-tyrosine from L-arogenate (NADP(+) route): step 1/1. Involved in the biosynthesis of tyrosine. Has no prephenate dehydrogenase activity. The chain is Arogenate dehydrogenase 1, chloroplastic (TYRAAT1) from Arabidopsis thaliana (Mouse-ear cress).